A 1412-amino-acid polypeptide reads, in one-letter code: DNA-directed RNA polymerase subunit beta' (1412 aa).

Positions 70, 72, 85, and 88 each coordinate Zn(2+). Mg(2+) is bound by residues Asp-460, Asp-462, and Asp-464. Positions 814, 888, 895, and 898 each coordinate Zn(2+). Residues 1378-1412 are disordered; the sequence is EREAARQLANPFEDAPVTVDADAPQSDAGQEGSAE.

The protein belongs to the RNA polymerase beta' chain family. As to quaternary structure, the RNAP catalytic core consists of 2 alpha, 1 beta, 1 beta' and 1 omega subunit. When a sigma factor is associated with the core the holoenzyme is formed, which can initiate transcription. Mg(2+) is required as a cofactor. Zn(2+) serves as cofactor.

It carries out the reaction RNA(n) + a ribonucleoside 5'-triphosphate = RNA(n+1) + diphosphate. DNA-dependent RNA polymerase catalyzes the transcription of DNA into RNA using the four ribonucleoside triphosphates as substrates. The chain is DNA-directed RNA polymerase subunit beta' from Bordetella petrii (strain ATCC BAA-461 / DSM 12804 / CCUG 43448).